A 59-amino-acid polypeptide reads, in one-letter code: MEKNRTTTFSVYLTIILFLISTFITMVITESNIIRVPEFQCPNGYRKDANGKCREVFHG.

Residues Met-1–Val-27 form the signal peptide. Residues Ile-28–Ser-31 constitute a propeptide that is removed on maturation. His-58 is modified (histidine amide).

In terms of tissue distribution, expressed by the venom gland.

It localises to the secreted. This Tetramorium bicarinatum (Tramp ant) protein is U17-myrmicitoxin-Tb1f.